Consider the following 273-residue polypeptide: Dermonecrotic toxin LhSicTox-alphaIA2avi (273 aa).

H5 is an active-site residue. Mg(2+) contacts are provided by E25 and D27. Residue H41 is the Nucleophile of the active site. Intrachain disulfides connect C45-C51 and C47-C190. D85 serves as a coordination point for Mg(2+).

The protein belongs to the arthropod phospholipase D family. Class II subfamily. It depends on Mg(2+) as a cofactor. As to expression, expressed by the venom gland.

It localises to the secreted. The enzyme catalyses an N-(acyl)-sphingosylphosphocholine = an N-(acyl)-sphingosyl-1,3-cyclic phosphate + choline. It catalyses the reaction an N-(acyl)-sphingosylphosphoethanolamine = an N-(acyl)-sphingosyl-1,3-cyclic phosphate + ethanolamine. It carries out the reaction a 1-acyl-sn-glycero-3-phosphocholine = a 1-acyl-sn-glycero-2,3-cyclic phosphate + choline. The catalysed reaction is a 1-acyl-sn-glycero-3-phosphoethanolamine = a 1-acyl-sn-glycero-2,3-cyclic phosphate + ethanolamine. Its function is as follows. Dermonecrotic toxins cleave the phosphodiester linkage between the phosphate and headgroup of certain phospholipids (sphingolipid and lysolipid substrates), forming an alcohol (often choline) and a cyclic phosphate. This toxin acts on sphingomyelin (SM). It may also act on ceramide phosphoethanolamine (CPE), lysophosphatidylcholine (LPC) and lysophosphatidylethanolamine (LPE), but not on lysophosphatidylserine (LPS), and lysophosphatidylglycerol (LPG). It acts by transphosphatidylation, releasing exclusively cyclic phosphate products as second products. Induces dermonecrosis, hemolysis, increased vascular permeability, edema, inflammatory response, and platelet aggregation. This chain is Dermonecrotic toxin LhSicTox-alphaIA2avi, found in Loxosceles hirsuta (Recluse spider).